Reading from the N-terminus, the 501-residue chain is Glycerol kinase (501 aa).

Thr-11 provides a ligand contact to ADP. Residues Thr-11, Thr-12, and Ser-13 each coordinate ATP. Sn-glycerol 3-phosphate is bound at residue Thr-11. Position 15 (Arg-15) interacts with ADP. Arg-81, Glu-82, Tyr-133, and Asp-242 together coordinate sn-glycerol 3-phosphate. Glycerol-binding residues include Arg-81, Glu-82, Tyr-133, Asp-242, and Gln-243. ADP contacts are provided by Thr-264 and Gly-307. Positions 264, 307, 311, and 409 each coordinate ATP. The ADP site is built by Gly-409 and Asn-413.

The protein belongs to the FGGY kinase family.

It carries out the reaction glycerol + ATP = sn-glycerol 3-phosphate + ADP + H(+). It functions in the pathway polyol metabolism; glycerol degradation via glycerol kinase pathway; sn-glycerol 3-phosphate from glycerol: step 1/1. With respect to regulation, inhibited by fructose 1,6-bisphosphate (FBP). In terms of biological role, key enzyme in the regulation of glycerol uptake and metabolism. Catalyzes the phosphorylation of glycerol to yield sn-glycerol 3-phosphate. In Borreliella afzelii (strain PKo) (Borrelia afzelii), this protein is Glycerol kinase.